Reading from the N-terminus, the 247-residue chain is Adenosylcobinamide-GDP ribazoletransferase (247 aa).

Helical transmembrane passes span 34 to 54 (IVMF…IFIL), 59 to 79 (CGIP…TGGF), 113 to 133 (GGLA…ELAL), 138 to 158 (MLAA…LLMY), 171 to 191 (VFIG…AVIV), and 194 to 214 (VLLP…AIFI).

The protein belongs to the CobS family. It depends on Mg(2+) as a cofactor.

Its subcellular location is the cell inner membrane. It catalyses the reaction alpha-ribazole + adenosylcob(III)inamide-GDP = adenosylcob(III)alamin + GMP + H(+). It carries out the reaction alpha-ribazole 5'-phosphate + adenosylcob(III)inamide-GDP = adenosylcob(III)alamin 5'-phosphate + GMP + H(+). The protein operates within cofactor biosynthesis; adenosylcobalamin biosynthesis; adenosylcobalamin from cob(II)yrinate a,c-diamide: step 7/7. Joins adenosylcobinamide-GDP and alpha-ribazole to generate adenosylcobalamin (Ado-cobalamin). Also synthesizes adenosylcobalamin 5'-phosphate from adenosylcobinamide-GDP and alpha-ribazole 5'-phosphate. In Salmonella paratyphi A (strain ATCC 9150 / SARB42), this protein is Adenosylcobinamide-GDP ribazoletransferase.